Here is a 386-residue protein sequence, read N- to C-terminus: Succinate--CoA ligase [ADP-forming] subunit beta (386 aa).

One can recognise an ATP-grasp domain in the interval 9 to 244 (KQVLRSSNLN…DSQIDAKEAA (236 aa)). Residues lysine 46, 53–55 (GRG), glutamate 99, leucine 102, and glutamate 107 contribute to the ATP site. Asparagine 199 and aspartate 213 together coordinate Mg(2+). Substrate-binding positions include asparagine 264 and 321-323 (GIV).

It belongs to the succinate/malate CoA ligase beta subunit family. In terms of assembly, heterotetramer of two alpha and two beta subunits. Mg(2+) serves as cofactor.

It carries out the reaction succinate + ATP + CoA = succinyl-CoA + ADP + phosphate. The enzyme catalyses GTP + succinate + CoA = succinyl-CoA + GDP + phosphate. It functions in the pathway carbohydrate metabolism; tricarboxylic acid cycle; succinate from succinyl-CoA (ligase route): step 1/1. Functionally, succinyl-CoA synthetase functions in the citric acid cycle (TCA), coupling the hydrolysis of succinyl-CoA to the synthesis of either ATP or GTP and thus represents the only step of substrate-level phosphorylation in the TCA. The beta subunit provides nucleotide specificity of the enzyme and binds the substrate succinate, while the binding sites for coenzyme A and phosphate are found in the alpha subunit. In Thiobacillus denitrificans (strain ATCC 25259 / T1), this protein is Succinate--CoA ligase [ADP-forming] subunit beta.